A 248-amino-acid chain; its full sequence is Ankyrin repeat domain-containing protein 45 (248 aa).

Acidic residues-rich tracts occupy residues 1 to 10 (MEPEETLESE) and 22 to 33 (EYEESQEAEETG). The segment at 1–42 (MEPEETLESESSEKSLFSSQQEYEESQEAEETGAENPLLQPT) is disordered. ANK repeat units lie at residues 75–104 (VGRNLLYAACMAGKSDVIKALAKYGVNLNE) and 108–137 (RGYTLLHCAAAWGRLETLKALVELDVDIEA).

Its subcellular location is the cytoplasm. It localises to the midbody. It is found in the midbody ring. The protein localises to the cleavage furrow. Its function is as follows. May play a role during cell division. This is Ankyrin repeat domain-containing protein 45 (Ankrd45) from Mus musculus (Mouse).